The sequence spans 189 residues: Elongation factor P (189 aa).

The protein belongs to the elongation factor P family.

The protein localises to the cytoplasm. The protein operates within protein biosynthesis; polypeptide chain elongation. Functionally, involved in peptide bond synthesis. Stimulates efficient translation and peptide-bond synthesis on native or reconstituted 70S ribosomes in vitro. Probably functions indirectly by altering the affinity of the ribosome for aminoacyl-tRNA, thus increasing their reactivity as acceptors for peptidyl transferase. This chain is Elongation factor P, found in Ehrlichia canis (strain Jake).